Reading from the N-terminus, the 364-residue chain is 2-oxoadipate dioxygenase/decarboxylase, chloroplastic/amyloplastic (364 aa).

The N-terminal 49 residues, methionine 1 to alanine 49, are a transit peptide targeting the chloroplast. 2-oxoadipate contacts are provided by histidine 107 and arginine 111. Histidine 107 contributes to the Fe(2+) binding site. Histidine 243 provides a ligand contact to Fe(2+). Residues glutamine 289 and tyrosine 313 each coordinate 2-oxoadipate. Glutamate 315 is a binding site for Fe(2+).

The protein belongs to the 2-oxoadipate dioxygenase/decarboxylase family. Requires Fe(2+) as cofactor. As to expression, expressed in roots, stems, leaf sheaths, leaf blades, panicles, and endosperm.

The protein resides in the plastid. The protein localises to the chloroplast. It is found in the amyloplast. It catalyses the reaction 2-oxoadipate + O2 = (R)-2-hydroxyglutarate + CO2. Its pathway is amino-acid degradation. Catalyzes the decarboxylation and hydroxylation of 2-oxoadipate (2OA) to form D-2-hydroxyglutarate (D-2-HGA). Is involved in a D-lysine catabolic pathway. Involved in the regulation of starch synthesis and amyloplast development within the peripheral endosperm during the grain-filling stage. In Oryza sativa subsp. japonica (Rice), this protein is 2-oxoadipate dioxygenase/decarboxylase, chloroplastic/amyloplastic.